The primary structure comprises 684 residues: Ski-like protein (684 aa).

Glycyl lysine isopeptide (Lys-Gly) (interchain with G-Cter in SUMO2) cross-links involve residues Lys50 and Lys70. The interval Ser420 to Pro454 is disordered. Ser452 carries the phosphoserine modification. Residues Lys489 and Lys527 each participate in a glycyl lysine isopeptide (Lys-Gly) (interchain with G-Cter in SUMO2) cross-link. A coiled-coil region spans residues Arg536–Glu684.

It belongs to the SKI family. As to quaternary structure, interacts with CPNE4 (via VWFA domain). Interacts with SMAD2, SMAD3 and RNF111. Isoform 1 interacts with WWP1. Ubiquitinated by RNF111 and ARK2C, promoting proteasomal degradation, leading to enhance the BMP-Smad signaling. As to expression, isoform SNON and isoform SNOA are widely expressed. Highest expression is found in skeletal muscle, followed by placenta and lung. Lowest expression in heart, brain and pancreas. Isoform SNOI expression is restricted to skeletal muscle.

May have regulatory role in cell division or differentiation in response to extracellular signals. This Homo sapiens (Human) protein is Ski-like protein (SKIL).